Reading from the N-terminus, the 559-residue chain is 2-isopropylmalate synthase (559 aa).

In terms of domain architecture, Pyruvate carboxyltransferase spans 33–307 (PIWCSSDLRD…NPDLDFSDID (275 aa)). Residues aspartate 42, histidine 246, histidine 248, and asparagine 282 each contribute to the Mg(2+) site. A regulatory domain region spans residues 439-559 (ANTPYALVSH…SLSQPEAKAA (121 aa)).

This sequence belongs to the alpha-IPM synthase/homocitrate synthase family. LeuA type 2 subfamily. Homodimer. Mg(2+) is required as a cofactor.

The protein localises to the cytoplasm. The catalysed reaction is 3-methyl-2-oxobutanoate + acetyl-CoA + H2O = (2S)-2-isopropylmalate + CoA + H(+). Its pathway is amino-acid biosynthesis; L-leucine biosynthesis; L-leucine from 3-methyl-2-oxobutanoate: step 1/4. Its function is as follows. Catalyzes the condensation of the acetyl group of acetyl-CoA with 3-methyl-2-oxobutanoate (2-ketoisovalerate) to form 3-carboxy-3-hydroxy-4-methylpentanoate (2-isopropylmalate). The chain is 2-isopropylmalate synthase from Pseudomonas fluorescens (strain Pf0-1).